Consider the following 289-residue polypeptide: Agroclavine dehydrogenase (289 aa).

This sequence belongs to the fgaFS/easG family. Monomer.

The enzyme catalyses agroclavine + NADP(+) = didehydroagroclavine + NADPH + H(+). It functions in the pathway alkaloid biosynthesis; ergot alkaloid biosynthesis. In terms of biological role, agroclavine dehydrogenase; part of the gene cluster that mediates the biosynthesis of fungal ergot alkaloid ergovaline, the predominant ergopeptine product in E.festucae var. lolii. DmaW catalyzes the first step of ergot alkaloid biosynthesis by condensing dimethylallyl diphosphate (DMAP) and tryptophan to form 4-dimethylallyl-L-tryptophan. The second step is catalyzed by the methyltransferase easF that methylates 4-dimethylallyl-L-tryptophan in the presence of S-adenosyl-L-methionine, resulting in the formation of 4-dimethylallyl-L-abrine. The catalase easC and the FAD-dependent oxidoreductase easE then transform 4-dimethylallyl-L-abrine to chanoclavine-I which is further oxidized by easD in the presence of NAD(+), resulting in the formation of chanoclavine-I aldehyde. Agroclavine dehydrogenase easG then mediates the conversion of chanoclavine-I aldehyde to agroclavine via a non-enzymatic adduct reaction: the substrate is an iminium intermediate that is formed spontaneously from chanoclavine-I aldehyde in the presence of glutathione. Further conversion of agroclavine to paspalic acid is a two-step process involving oxidation of agroclavine to elymoclavine and of elymoclavine to paspalic acid, the second step being performed by the elymoclavine oxidase cloA. However, cloA does not encode a functional enzyme indicating that C.fusiformis terminates its ergot alkaloid pathway at elymoclavine. The polypeptide is Agroclavine dehydrogenase (Claviceps fusiformis (Ergot fungus)).